The following is a 214-amino-acid chain: 3-isopropylmalate dehydratase small subunit (214 aa).

This sequence belongs to the LeuD family. LeuD type 1 subfamily. In terms of assembly, heterodimer of LeuC and LeuD.

The enzyme catalyses (2R,3S)-3-isopropylmalate = (2S)-2-isopropylmalate. It participates in amino-acid biosynthesis; L-leucine biosynthesis; L-leucine from 3-methyl-2-oxobutanoate: step 2/4. Catalyzes the isomerization between 2-isopropylmalate and 3-isopropylmalate, via the formation of 2-isopropylmaleate. The polypeptide is 3-isopropylmalate dehydratase small subunit (Pseudomonas putida (strain W619)).